Consider the following 213-residue polypeptide: Holliday junction branch migration complex subunit RuvA (213 aa).

Positions 1–63 (MISFLRGTVA…EDSMTLFGFA (63 aa)) are domain I. The interval 64 to 140 (DDDEREVFEV…LVPHGTAPAA (77 aa)) is domain II. Residues 140 to 144 (AATTA) are flexible linker. The interval 145–213 (AEASWKPQVV…RAGNRVGSRG (69 aa)) is domain III.

It belongs to the RuvA family. Homotetramer. Forms an RuvA(8)-RuvB(12)-Holliday junction (HJ) complex. HJ DNA is sandwiched between 2 RuvA tetramers; dsDNA enters through RuvA and exits via RuvB. An RuvB hexamer assembles on each DNA strand where it exits the tetramer. Each RuvB hexamer is contacted by two RuvA subunits (via domain III) on 2 adjacent RuvB subunits; this complex drives branch migration. In the full resolvosome a probable DNA-RuvA(4)-RuvB(12)-RuvC(2) complex forms which resolves the HJ.

The protein localises to the cytoplasm. Functionally, the RuvA-RuvB-RuvC complex processes Holliday junction (HJ) DNA during genetic recombination and DNA repair, while the RuvA-RuvB complex plays an important role in the rescue of blocked DNA replication forks via replication fork reversal (RFR). RuvA specifically binds to HJ cruciform DNA, conferring on it an open structure. The RuvB hexamer acts as an ATP-dependent pump, pulling dsDNA into and through the RuvAB complex. HJ branch migration allows RuvC to scan DNA until it finds its consensus sequence, where it cleaves and resolves the cruciform DNA. This chain is Holliday junction branch migration complex subunit RuvA, found in Pseudarthrobacter chlorophenolicus (strain ATCC 700700 / DSM 12829 / CIP 107037 / JCM 12360 / KCTC 9906 / NCIMB 13794 / A6) (Arthrobacter chlorophenolicus).